We begin with the raw amino-acid sequence, 250 residues long: Bacteriorhodopsin-II (250 aa).

Transmembrane regions (helical) follow at residues 14 to 34, 49 to 69, 89 to 109, 114 to 134, 142 to 162, 183 to 203, and 210 to 230; these read EGIW…YFMA, VITI…FFGF, YADW…LAGA, MASL…ATLM, AFWT…VVVV, IILV…EGLG, and ETLL…FILL. Lys-222 is modified (N6-(retinylidene)lysine).

The protein belongs to the archaeal/bacterial/fungal opsin family. In terms of processing, the covalent binding of retinal to the apoprotein, bacterioopsin, generates bacteriorhodopsin.

The protein resides in the membrane. Functionally, light-driven proton pump. The protein is Bacteriorhodopsin-II (xop1) of Haloarcula marismortui (strain ATCC 43049 / DSM 3752 / JCM 8966 / VKM B-1809) (Halobacterium marismortui).